The sequence spans 483 residues: Glutamate--tRNA ligase (483 aa).

The 'HIGH' region motif lies at 11–21 (PSPTGHLHIGN). Cys-108, Cys-110, His-135, and Asp-137 together coordinate Zn(2+). A 'KMSKS' region motif is present at residues 252-256 (KLSKR). Lys-255 lines the ATP pocket.

It belongs to the class-I aminoacyl-tRNA synthetase family. Glutamate--tRNA ligase type 1 subfamily. As to quaternary structure, monomer. Zn(2+) serves as cofactor.

It is found in the cytoplasm. The enzyme catalyses tRNA(Glu) + L-glutamate + ATP = L-glutamyl-tRNA(Glu) + AMP + diphosphate. In terms of biological role, catalyzes the attachment of glutamate to tRNA(Glu) in a two-step reaction: glutamate is first activated by ATP to form Glu-AMP and then transferred to the acceptor end of tRNA(Glu). The chain is Glutamate--tRNA ligase from Bacillus subtilis (strain 168).